A 166-amino-acid chain; its full sequence is Nucleotide-binding protein Dred_1927 (166 aa).

It belongs to the YajQ family.

Its function is as follows. Nucleotide-binding protein. This chain is Nucleotide-binding protein Dred_1927, found in Desulforamulus reducens (strain ATCC BAA-1160 / DSM 100696 / MI-1) (Desulfotomaculum reducens).